The chain runs to 574 residues: MANPPHGGVLKDLLARDAPRHDELEIEAEQLPAIVLTERQLCDLELIMNGGFSPLEGFMNQKDYDSVCENVRLADGNLFSMPITLDVSQAVIDDGKLKPGSRVTLRDFRDDRNLAILTIDDIYRPDKAKEAKLVFGGDEEHPAIKYLYNKVQEFYVGGKIEAINKLNHYDYVALRYTPAELRVHFDKLGWNRVVAFQTRNPMHRAHRELTVRAARARQANVLIHPVVGLTKPGDIDHFTRVRAYQALLPRYPNGMAVLGLLGLAMRMGGPREAIWHAIIRKNHGATHFIVGRDHAGPGKNSKGQEFYGPYDAQHAVEKYREELGIEVVEFQQVTYLPDTDEYKPKDEVPAGVKTLDISGTELRNRLRTGAPIPEWFSYPEVVKILRESSPPRHTQGFTIFLTGYMNSGKDAIARALQVTLNQQGGRSVSLLLGDTVRHELSSELGFSREDRHTNIQRIAFVAGELTRAGAAVIASPIAPYEESRNAARDAVTQAGGNFFLVHVATPLEYCEKTDKRGIYAKARRGEIKGFTGVDDPYETPSKADLTVDVSKQTVRSIVHEIILMLETEGFFDRS.

Residues 1-169 (MANPPHGGVL…IEAINKLNHY (169 aa)) form an N-terminal region. The segment at 170-394 (DYVALRYTPA…LRESSPPRHT (225 aa)) is catalytic. Gln-197 is a sulfate binding site. Residues 197–200 (QTRN) and 291–294 (GRDH) contribute to the ATP site. Catalysis depends on residues Thr-198, Arg-199, and Asn-200. Arg-199 provides a ligand contact to sulfate. Ala-295 serves as a coordination point for sulfate. Residue Val-333 coordinates ATP. Residues 395–574 (QGFTIFLTGY…LETEGFFDRS (180 aa)) form an allosteric regulation domain; adenylyl-sulfate kinase-like region. Residues 434–437 (DTVR), Arg-451, 477–478 (IA), and Arg-516 each bind 3'-phosphoadenylyl sulfate.

The protein in the N-terminal section; belongs to the sulfate adenylyltransferase family. This sequence in the C-terminal section; belongs to the APS kinase family. Homohexamer. Dimer of trimers.

Its subcellular location is the cytoplasm. The catalysed reaction is sulfate + ATP + H(+) = adenosine 5'-phosphosulfate + diphosphate. Its pathway is sulfur metabolism; hydrogen sulfide biosynthesis; sulfite from sulfate: step 1/3. Its activity is regulated as follows. Allosterically inhibited by 3'-phosphoadenosine 5'-phosphosulfate (PAPS). Its function is as follows. Catalyzes the first intracellular reaction of sulfate assimilation, forming adenosine-5'-phosphosulfate (APS) from inorganic sulfate and ATP. Plays an important role in sulfate activation as a component of the biosynthesis pathway of sulfur-containing amino acids. This is Sulfate adenylyltransferase from Neosartorya fischeri (strain ATCC 1020 / DSM 3700 / CBS 544.65 / FGSC A1164 / JCM 1740 / NRRL 181 / WB 181) (Aspergillus fischerianus).